The sequence spans 254 residues: Ciliary microtubule associated protein 1A (254 aa).

2 STPGR repeats span residues 180–205 (PGPAAYRQTEVQVTKFKAPQYTMAAR) and 216–241 (PGPGAHSPEKVTLNKPCAPTVTFGIK). The tract at residues 207–228 (EPPGDKTLKPGPGAHSPEKVTL) is disordered.

Belongs to the CIMAP family. As to quaternary structure, microtubule inner protein component of sperm flagellar doublet microtubules. Testis-specific (at protein level). Expression restricted to the germ cell fraction, absent in somatic cell fractions such as Sertoli and Leydig cells. Expression detected in the third week postpartum (23 days) after haploid germ cells developed, expression increased with age. Expressed in the tails of elongated spermatids sticking out toward the tubular lumen, and in cytoplasmic droplets still attached to the spermatid tail membrane. Expressed in the tails of mature sperm, from the connecting piece proximal to the head, along the middle and principal pieces, down to the distal end piece.

The protein localises to the cytoplasm. It localises to the cytoskeleton. Its subcellular location is the flagellum axoneme. Outer dense fibers are filamentous structures located on the outside of the axoneme in the midpiece and principal piece of the mammalian sperm tail. May help to maintain the passive elastic structures and elastic recoil of the sperm tail. The polypeptide is Ciliary microtubule associated protein 1A (Cimap1a) (Mus musculus (Mouse)).